Reading from the N-terminus, the 175-residue chain is MKTMFLLALLAFTATSAVAQLYTTCSQGYGQCQQQPQPQPQMNTCAAFLQQCIQTPYVQSQMWQASGCQLMRQQCCQPLAQISEQARCQAVCSVSQIIMRQQQGQRFGQPQQQQGQSFGQPQQQVPVEIMRMVLQTLPSMCSVNIPQYCTTTPCSTITPAIYSIPMTATCAGGAC.

Positions 1–19 are cleaved as a signal peptide; the sequence is MKTMFLLALLAFTATSAVA.

This sequence belongs to the prolamin family. Contains 7 disulfide bonds.

Its function is as follows. Seed storage protein. Not integrated in the gluten polymer through disulfide bonds, unless incorporated by reduction and reoxidation during dough making. Increases dough strength and bread volume, but decreases dough stability when added into a base wheat flour. In Triticum aestivum (Wheat), this protein is Avenin-like a3.